A 140-amino-acid polypeptide reads, in one-letter code: Putative pre-16S rRNA nuclease (140 aa).

Belongs to the YqgF nuclease family.

The protein localises to the cytoplasm. In terms of biological role, could be a nuclease involved in processing of the 5'-end of pre-16S rRNA. The sequence is that of Putative pre-16S rRNA nuclease from Halalkalibacterium halodurans (strain ATCC BAA-125 / DSM 18197 / FERM 7344 / JCM 9153 / C-125) (Bacillus halodurans).